The chain runs to 184 residues: Ribosome-recycling factor (184 aa).

The protein belongs to the RRF family.

Its subcellular location is the cytoplasm. Its function is as follows. Responsible for the release of ribosomes from messenger RNA at the termination of protein biosynthesis. May increase the efficiency of translation by recycling ribosomes from one round of translation to another. This is Ribosome-recycling factor from Leptospira borgpetersenii serovar Hardjo-bovis (strain JB197).